Consider the following 2383-residue polypeptide: Reducing polyketide synthase rdc5 (2383 aa).

The 429-residue stretch at 10 to 438 (RAPIAIIGMS…GTNAHLVLER (429 aa)) folds into the Ketosynthase family 3 (KS3) domain. Catalysis depends on for beta-ketoacyl synthase activity residues C186, H321, and H361. Positions 550–881 (FVFTGQGAQW…GFAAELFRRG (332 aa)) are malonyl-CoA:ACP transacylase (MAT) domain. The interval 930-1066 (KSLIGAERPS…GLFSINYEDS (137 aa)) is N-terminal hotdog fold. Residues 930–1253 (KSLIGAERPS…LAELEVEDAD (324 aa)) enclose the PKS/mFAS DH domain. The interval 932-1250 (LIGAERPSLD…DFHLAELEVE (319 aa)) is dehydratase (DH) domain. The Proton acceptor; for dehydratase activity role is filled by H962. The C-terminal hotdog fold stretch occupies residues 1094 to 1253 (VEVISKQAFY…LAELEVEDAD (160 aa)). D1160 functions as the Proton donor; for dehydratase activity in the catalytic mechanism. Positions 1663–1977 (GLLNTLHFVS…QGKHVGKMIL (315 aa)) are enoyl reductase (ER) domain. The Phosphocysteine intermediate role is filled by C1776. The ketoreductase (KR) domain stretch occupies residues 2002-2182 (ATYLFIGGLG…VSVNLGIMRD (181 aa)). The region spanning 2300–2377 (AAGPIITKAL…QFAVQIAKKS (78 aa)) is the Carrier domain. The residue at position 2337 (S2337) is an O-(pantetheine 4'-phosphoryl)serine.

Its pathway is secondary metabolite biosynthesis. Its function is as follows. Reducing polyketide synthase; part of the gene cluster that mediates the biosynthesis of radicicol, a resorcylic acid lactone (RAL) that irreversibly inhibits the HSP90 molecular chaperone, an important target for cancer chemotherapy. The radicicol cluster encodes only two apparent post-PKS enzymes, a cytochrome P450 monooxygenase (rdc4) and a non-heme halogenase (rdc2) that could introduce the epoxide and the chlorine, respectively. If this cluster includes all the genes required for radicicol biosynthesis, the remaining structural features of radicicol are presumably generated by the PKSs rdc1 and rdc5. The C-2' ketone could arise if the R-PKS rdc5 and NR-PKS rdc1 each carry out four iterations, in contrast to the five iteration-three iteration split for the hypothemycin PKSs. The origin of the cis 5',6' double bond is not known. The radicicol R-PKS rdc5 ER domain may catalyze either double bond isomerization or reduction in the third iteration. This chain is Reducing polyketide synthase rdc5, found in Metacordyceps chlamydosporia (Nematophagous fungus).